Reading from the N-terminus, the 655-residue chain is p-hydroxybenzoic acid efflux pump subunit AaeB (655 aa).

Helical transmembrane passes span 13–33 (FAVK…HFQL), 38–58 (WAVL…GGEP), 69–89 (LRII…IAMI), 93–113 (LLMI…SSLV), 121–141 (WGLA…EPLL), 152–172 (EIVI…PRSI), 370–390 (LFWL…IAVV), 407–427 (FIYG…VIIP), 431–451 (QSML…GIEV), 459–479 (MGAL…TFHF), and 482–502 (FLDS…VILL).

Belongs to the aromatic acid exporter ArAE (TC 2.A.85) family.

It is found in the cell inner membrane. Its function is as follows. Forms an efflux pump with AaeA. Could function as a metabolic relief valve, allowing to eliminate certain compounds when they accumulate to high levels in the cell. The protein is p-hydroxybenzoic acid efflux pump subunit AaeB of Escherichia coli (strain SMS-3-5 / SECEC).